A 500-amino-acid polypeptide reads, in one-letter code: NAD(P)H-quinone oxidoreductase chain 4, chloroplastic (500 aa).

14 consecutive transmembrane segments (helical) span residues 4 to 24 (FPWL…MLFL), 35 to 55 (YTIC…CYNF), 87 to 107 (IGTI…AFPV), 113 to 130 (LFHF…GSFS), 134 to 154 (LLLF…LLAM), 167 to 187 (FILY…GLSL), 211 to 231 (ILFY…IPLH), 242 to 262 (HYST…YGLV), 272 to 292 (AHSM…IYAA), 305 to 325 (IAYS…SITD), 330 to 350 (GAIL…FLAG), 386 to 406 (LALP…GIIT), 416 to 436 (ILII…LLSM), and 462 to 482 (LFLS…PDFV).

The protein belongs to the complex I subunit 4 family.

The protein resides in the plastid. Its subcellular location is the chloroplast thylakoid membrane. It carries out the reaction a plastoquinone + NADH + (n+1) H(+)(in) = a plastoquinol + NAD(+) + n H(+)(out). The catalysed reaction is a plastoquinone + NADPH + (n+1) H(+)(in) = a plastoquinol + NADP(+) + n H(+)(out). The protein is NAD(P)H-quinone oxidoreductase chain 4, chloroplastic of Lepidium virginicum (Virginia pepperweed).